Consider the following 215-residue polypeptide: LexA repressor (215 aa).

The H-T-H motif DNA-binding region spans 29-49 (VREICSAVGFKSTSTVHSYLQ). Catalysis depends on for autocatalytic cleavage activity residues Ser138 and Lys175.

This sequence belongs to the peptidase S24 family. In terms of assembly, homodimer.

The enzyme catalyses Hydrolysis of Ala-|-Gly bond in repressor LexA.. Represses a number of genes involved in the response to DNA damage (SOS response), including recA and lexA. In the presence of single-stranded DNA, RecA interacts with LexA causing an autocatalytic cleavage which disrupts the DNA-binding part of LexA, leading to derepression of the SOS regulon and eventually DNA repair. This Ruminiclostridium cellulolyticum (strain ATCC 35319 / DSM 5812 / JCM 6584 / H10) (Clostridium cellulolyticum) protein is LexA repressor.